A 210-amino-acid polypeptide reads, in one-letter code: Thymidylate kinase (210 aa).

Position 10–17 (10–17) interacts with ATP; that stretch reads GPEGAGKS.

This sequence belongs to the thymidylate kinase family.

It catalyses the reaction dTMP + ATP = dTDP + ADP. Its function is as follows. Phosphorylation of dTMP to form dTDP in both de novo and salvage pathways of dTTP synthesis. This chain is Thymidylate kinase, found in Pseudomonas putida (strain GB-1).